The following is a 265-amino-acid chain: Deoxycytidine kinase 1 (265 aa).

30–38 (GNIAAGKST) is an ATP binding site. Residues E55, Y88, and Q99 each coordinate substrate. The active-site Proton acceptor is the E129. Positions 130 and 135 each coordinate substrate. 190 to 194 (RVYTR) is an ATP binding site. Substrate is bound at residue E199. An ATP-binding site is contributed by 242–244 (EDF).

It belongs to the DCK/DGK family. Homodimer.

It is found in the nucleus. It carries out the reaction 2'-deoxycytidine + a ribonucleoside 5'-triphosphate = dCMP + a ribonucleoside 5'-diphosphate + H(+). The catalysed reaction is 2'-deoxyguanosine + ATP = dGMP + ADP + H(+). It catalyses the reaction 2'-deoxyadenosine + ATP = dAMP + ADP + H(+). In terms of biological role, phosphorylates the deoxyribonucleosides deoxyadenosine, deoxycytidine and deoxyguanosine with highest activity against deoxycytidine followed by deadenosine and deoxyguanosine. Shows only very minor activity against deoxyuridine and deoxythymidine. The sequence is that of Deoxycytidine kinase 1 from Xenopus laevis (African clawed frog).